The primary structure comprises 853 residues: DNA mismatch repair protein MutS (853 aa).

613–620 serves as a coordination point for ATP; sequence GPNMGGKS.

The protein belongs to the DNA mismatch repair MutS family.

This protein is involved in the repair of mismatches in DNA. It is possible that it carries out the mismatch recognition step. This protein has a weak ATPase activity. In Vibrio campbellii (strain ATCC BAA-1116), this protein is DNA mismatch repair protein MutS.